Reading from the N-terminus, the 320-residue chain is Biotin synthase (320 aa).

Positions G43 to R270 constitute a Radical SAM core domain. The [4Fe-4S] cluster site is built by C58, C62, and C65. [2Fe-2S] cluster-binding residues include C102, C133, C193, and R265.

This sequence belongs to the radical SAM superfamily. Biotin synthase family. Homodimer. [4Fe-4S] cluster is required as a cofactor. Requires [2Fe-2S] cluster as cofactor.

It catalyses the reaction (4R,5S)-dethiobiotin + (sulfur carrier)-SH + 2 reduced [2Fe-2S]-[ferredoxin] + 2 S-adenosyl-L-methionine = (sulfur carrier)-H + biotin + 2 5'-deoxyadenosine + 2 L-methionine + 2 oxidized [2Fe-2S]-[ferredoxin]. It participates in cofactor biosynthesis; biotin biosynthesis; biotin from 7,8-diaminononanoate: step 2/2. Catalyzes the conversion of dethiobiotin (DTB) to biotin by the insertion of a sulfur atom into dethiobiotin via a radical-based mechanism. This Hyphomonas neptunium (strain ATCC 15444) protein is Biotin synthase.